The primary structure comprises 342 residues: Sorting nexin-15 (342 aa).

Residues 1–130 enclose the PX domain; that stretch reads MSRQAKDDFL…EFFRGGEVTR (130 aa). Residues Arg51, Ser53, Arg87, and Arg96 each contribute to the a 1,2-diacyl-sn-glycero-3-phospho-(1D-myo-inositol-3-phosphate) site. At Arg105 the chain carries Omega-N-methylarginine. 2 positions are modified to phosphoserine: Ser201 and Ser227. Positions 245–267 are disordered; the sequence is DQEPWEPGGQEEEEDGEGGPTPA. The MIT domain occupies 265 to 342; that stretch reads TPAYLSQATE…LRLHLSQLPP (78 aa).

This sequence belongs to the sorting nexin family. Homodimer. Interacts with SNX1, SNX2 and SNX4. In terms of tissue distribution, widely expressed.

It is found in the cytoplasm. The protein resides in the membrane. It localises to the cytoplasmic vesicle membrane. May be involved in several stages of intracellular trafficking. Overexpression of SNX15 disrupts the normal trafficking of proteins from the plasma membrane to recycling endosomes or the TGN. The protein is Sorting nexin-15 (SNX15) of Homo sapiens (Human).